The following is a 430-amino-acid chain: Probable aspartic-type endopeptidase ARB_07403 (430 aa).

The first 17 residues, 1–17, serve as a signal peptide directing secretion; sequence MHVSTLLVAVLLPLALS. Positions 18–87 are cleaved as a propeptide — activation peptide; the sequence is KPTPRKKTGS…SKATAGSGKE (70 aa). The disordered stretch occupies residues 66–105; it reads YHPQHISKLPGNSKATAGSGKEGVESQDEKGEVVNNPTNH. The segment covering 87–97 has biased composition (basic and acidic residues); it reads EGVESQDEKGE. The region spanning 109 to 427 is the Peptidase A1 domain; sequence FLSPVTIGGQ…DQRGPSISLA (319 aa). Residue aspartate 125 is part of the active site. N-linked (GlcNAc...) asparagine glycosylation occurs at asparagine 306. Aspartate 314 is a catalytic residue.

This sequence belongs to the peptidase A1 family.

The protein localises to the secreted. In terms of biological role, probable secreted aspartic-type endopeptidase which contributes to virulence. The sequence is that of Probable aspartic-type endopeptidase ARB_07403 from Arthroderma benhamiae (strain ATCC MYA-4681 / CBS 112371) (Trichophyton mentagrophytes).